The primary structure comprises 110 residues: uncharacterized protein (110 aa).

This is an uncharacterized protein from Human cytomegalovirus (strain AD169) (HHV-5).